Reading from the N-terminus, the 663-residue chain is UvrABC system protein B (663 aa).

The region spanning 31–271 (DNIEGGEKAQ…EASIAKIQAE (241 aa)) is the Helicase ATP-binding domain. Residue 44 to 51 (GATGTGKT) coordinates ATP. The Beta-hairpin motif lies at 97 to 120 (YYDYYQPEAYVPSSDTYIEKDSSV). A Helicase C-terminal domain is found at 435 to 601 (QMDDLLGEIN…TIKKEIRDLI (167 aa)). The region spanning 627 to 662 (QEAIKKLQKQMHEAAELLDFELAAQIRDMVLELKSM) is the UVR domain.

Belongs to the UvrB family. Forms a heterotetramer with UvrA during the search for lesions. Interacts with UvrC in an incision complex.

The protein localises to the cytoplasm. The UvrABC repair system catalyzes the recognition and processing of DNA lesions. A damage recognition complex composed of 2 UvrA and 2 UvrB subunits scans DNA for abnormalities. Upon binding of the UvrA(2)B(2) complex to a putative damaged site, the DNA wraps around one UvrB monomer. DNA wrap is dependent on ATP binding by UvrB and probably causes local melting of the DNA helix, facilitating insertion of UvrB beta-hairpin between the DNA strands. Then UvrB probes one DNA strand for the presence of a lesion. If a lesion is found the UvrA subunits dissociate and the UvrB-DNA preincision complex is formed. This complex is subsequently bound by UvrC and the second UvrB is released. If no lesion is found, the DNA wraps around the other UvrB subunit that will check the other stand for damage. This is UvrABC system protein B from Streptococcus uberis (strain ATCC BAA-854 / 0140J).